Consider the following 213-residue polypeptide: Adenylate kinase (213 aa).

ATP is bound at residue 10–15 (GAGKGT). An NMP region spans residues 30-59 (STGDMFRAAMANQTEMGVLAKSYIDKGDLV). AMP contacts are provided by residues Thr-31, Arg-36, 57 to 59 (DLV), 86 to 89 (GYPR), and Gln-93. The segment at 127–160 (GRIINKKTGETFHKIFNPPVGDYKEEDFYQREDD) is LID. ATP contacts are provided by residues Arg-128 and 137-138 (TF). 2 residues coordinate AMP: Arg-157 and Arg-168. Lys-196 is an ATP binding site.

It belongs to the adenylate kinase family. In terms of assembly, monomer.

It localises to the cytoplasm. It carries out the reaction AMP + ATP = 2 ADP. It functions in the pathway purine metabolism; AMP biosynthesis via salvage pathway; AMP from ADP: step 1/1. Catalyzes the reversible transfer of the terminal phosphate group between ATP and AMP. Plays an important role in cellular energy homeostasis and in adenine nucleotide metabolism. The protein is Adenylate kinase of Streptococcus equi subsp. zooepidemicus (strain H70).